The chain runs to 357 residues: MAEAATIAKLEEGFKKLEAATDCKSLLKKYLTKSVFDQLKGKKTSLGATLLDVIQSGVENLDSGVGVYAPDAEAYTLFAPLFDPIIEDYHKGFKQTDKHPNKDFGDVNQFVNVDPDGKFVISTRVRCGRSMEGYPFNPCLTEAQYKEMESKVSSTLSNLEGELKGTYFPLTGMTKDVQQKLIDDHFLFKEGDRFLQAANACRYWPTGRGIYHNDNKTFLVWCNEEDHLRIISMQMGGDLGQVYRRLVSAVNEIEKRVPFSHHDRLGFLTFCPTNLGTTVRASVHIKLPKLAANREKLEEVAGKYSLQVRGTRGEHTEAEGGVYDISNKRRMGLTEYQAVKEMQDGILELIKIEKEMQ.

Residues 9-91 (KLEEGFKKLE…FDPIIEDYHK (83 aa)) form the Phosphagen kinase N-terminal domain. 64 to 68 (GVGVY) contributes to the L-arginine binding site. One can recognise a Phosphagen kinase C-terminal domain in the interval 119 to 356 (FVISTRVRCG…LELIKIEKEM (238 aa)). ATP-binding positions include 122–126 (STRVR) and histidine 185. A disulfide bond links cysteine 201 and cysteine 271. Glutamate 225 is a binding site for L-arginine. Arginine 229 is an ATP binding site. Position 271 (cysteine 271) interacts with L-arginine. ATP is bound by residues 280-284 (RASVH) and 309-314 (RGTRGE). Glutamate 314 contributes to the L-arginine binding site.

Belongs to the ATP:guanido phosphotransferase family. Expressed in chela muscle (at protein level). Expressed in muscle.

The enzyme catalyses L-arginine + ATP = N(omega)-phospho-L-arginine + ADP + H(+). Its function is as follows. Catalyzes the reversible transfer of high energy ATP gamma-phosphate group to L-arginine. The protein is Arginine kinase Cal b 2.0101 of Callinectes bellicosus (Warrior swimming crab).